Reading from the N-terminus, the 62-residue chain is uncharacterized protein (62 aa).

Residues 1–18 (MTTNRVDPLEQTSPNTPT) show a composition bias toward polar residues. Positions 1 to 24 (MTTNRVDPLEQTSPNTPTSKREKA) are disordered.

This is an uncharacterized protein from Rickettsia conorii (strain ATCC VR-613 / Malish 7).